Here is a 760-residue protein sequence, read N- to C-terminus: Complement C2 (760 aa).

The first 18 residues, 1–18 (MAPLLALFYLLQLGPGLA), serve as a signal peptide directing secretion. 3 consecutive Sushi domains span residues 20-90 (LFCN…AVCK), 92-151 (VRCL…VCDN), and 154-212 (SHCP…ICRQ). Cystine bridges form between Cys22–Cys62, Cys49–Cys89, Cys94–Cys136, Cys122–Cys149, Cys156–Cys197, and Cys182–Cys210. 2 N-linked (GlcNAc...) asparagine glycosylation sites follow: Asn27 and Asn32. An N-linked (GlcNAc...) asparagine glycan is attached at Asn117. A VWFA domain is found at 261-459 (NLYLLLDASQ…KALQQIFEHM (199 aa)). An MIDAS-like motif motif is present at residues 267-271 (DASQS). Mg(2+)-binding residues include Ser269 and Ser271. Asn297 and Asn340 each carry an N-linked (GlcNAc...) asparagine glycan. Thr344 lines the Mg(2+) pocket. 5 disulfides stabilise this stretch: Cys470/Cys590, Cys499/Cys515, Cys593/Cys609, Cys647/Cys674, and Cys685/Cys715. The Peptidase S1 domain occupies 471–752 (GVGNMSANAS…LQPWLRQHLD (282 aa)). Asn474 and Asn478 each carry an N-linked (GlcNAc...) asparagine glycan. Active-site charge relay system residues include His514 and Asp570. An N-linked (GlcNAc...) asparagine glycan is attached at Asn663. The Charge relay system role is filled by Ser689.

It belongs to the peptidase S1 family. As to quaternary structure, serine protease component of the C3 convertase, also named C4bC2b, composed of the serine protease complement C2b and complement C4b. Serine protease component of the C5 convertase, also named C4bC2bC3b, composed of the serine protease complement C2b, complement C3b, as well as complement C4b. Mg(2+) serves as cofactor. The cofactor is Mn(2+). Post-translationally, cleaved and activated by different proteases depending on the complement pathway to generate complement C2a and serine protease complement C2b chains. Cleaved and activated by C1S following activation by the classical complement system. Cleaved and activated by MASP2 following activation by the lectin complement system. Cleaved and activated by GZMK following activation by the GZMK complement system.

It localises to the secreted. The protein resides in the cell surface. The enzyme catalyses Selective cleavage of Arg-|-Ser bond in complement component C3 alpha-chain to form C3a and C3b, and Arg-|-Xaa bond in complement component C5 alpha-chain to form C5a and C5b.. Functionally, precursor of the catalytic component of the C3 and C5 convertase complexes, which are part of the complement pathway, a cascade of proteins that leads to phagocytosis and breakdown of pathogens and signaling that strengthens the adaptive immune system. Component C2 is part of the classical, lectin and GZMK complement systems. Catalytic component of the complement C3 and C5 convertase complexes. Following complement activation, recruited to the surface of pathogens by complement C4b opsonin to form the C3 convertase, or C3b and C4b opsonins to form the C5 convertase. As part of the C3 convertase, cleaves and activate C3 into C3a anaphylatoxin and C3b opsonin, the next components of the complement pathways. As part of the C5 convertase, cleaves and activate C5 into C5a anaphylatoxin and C5b component of the membrane attack complex. The chain is Complement C2 from Mus musculus (Mouse).